We begin with the raw amino-acid sequence, 1396 residues long: DNA-directed RNA polymerase subunit beta' (1396 aa).

Zn(2+) is bound by residues Cys-72, Cys-74, Cys-87, and Cys-90. Mg(2+)-binding residues include Asp-463, Asp-465, and Asp-467. Zn(2+) is bound by residues Cys-814, Cys-889, Cys-896, and Cys-899.

The protein belongs to the RNA polymerase beta' chain family. As to quaternary structure, the RNAP catalytic core consists of 2 alpha, 1 beta, 1 beta' and 1 omega subunit. When a sigma factor is associated with the core the holoenzyme is formed, which can initiate transcription. It depends on Mg(2+) as a cofactor. Zn(2+) is required as a cofactor.

It carries out the reaction RNA(n) + a ribonucleoside 5'-triphosphate = RNA(n+1) + diphosphate. Its function is as follows. DNA-dependent RNA polymerase catalyzes the transcription of DNA into RNA using the four ribonucleoside triphosphates as substrates. The polypeptide is DNA-directed RNA polymerase subunit beta' (Chlamydia muridarum (strain MoPn / Nigg)).